The sequence spans 338 residues: Eukaryotic translation initiation factor 3 subunit H (338 aa).

Residues 22–154 enclose the MPN domain; it reads VQCDGLAVMK…LKAYRLTPQA (133 aa).

It belongs to the eIF-3 subunit H family. In terms of assembly, component of the eukaryotic translation initiation factor 3 (eIF-3) complex. The eIF-3 complex interacts with pix. Interacts with mxt.

It is found in the cytoplasm. Component of the eukaryotic translation initiation factor 3 (eIF-3) complex, which is involved in protein synthesis of a specialized repertoire of mRNAs and, together with other initiation factors, stimulates binding of mRNA and methionyl-tRNAi to the 40S ribosome. The eIF-3 complex specifically targets and initiates translation of a subset of mRNAs involved in cell proliferation. The polypeptide is Eukaryotic translation initiation factor 3 subunit H (Drosophila sechellia (Fruit fly)).